Here is a 96-residue protein sequence, read N- to C-terminus: Small ribosomal subunit protein bS6 (96 aa).

This sequence belongs to the bacterial ribosomal protein bS6 family.

Binds together with bS18 to 16S ribosomal RNA. This is Small ribosomal subunit protein bS6 from Streptomyces griseus subsp. griseus (strain JCM 4626 / CBS 651.72 / NBRC 13350 / KCC S-0626 / ISP 5235).